The sequence spans 611 residues: Dihydroxy-acid dehydratase (611 aa).

Residue Asp-81 participates in Mg(2+) binding. Cys-122 serves as a coordination point for [2Fe-2S] cluster. The Mg(2+) site is built by Asp-123 and Lys-124. Position 124 is an N6-carboxylysine (Lys-124). Cys-195 serves as a coordination point for [2Fe-2S] cluster. Glu-491 contributes to the Mg(2+) binding site. Ser-517 (proton acceptor) is an active-site residue.

Belongs to the IlvD/Edd family. Homodimer. Requires [2Fe-2S] cluster as cofactor. The cofactor is Mg(2+).

The catalysed reaction is (2R)-2,3-dihydroxy-3-methylbutanoate = 3-methyl-2-oxobutanoate + H2O. It carries out the reaction (2R,3R)-2,3-dihydroxy-3-methylpentanoate = (S)-3-methyl-2-oxopentanoate + H2O. Its pathway is amino-acid biosynthesis; L-isoleucine biosynthesis; L-isoleucine from 2-oxobutanoate: step 3/4. The protein operates within amino-acid biosynthesis; L-valine biosynthesis; L-valine from pyruvate: step 3/4. In terms of biological role, functions in the biosynthesis of branched-chain amino acids. Catalyzes the dehydration of (2R,3R)-2,3-dihydroxy-3-methylpentanoate (2,3-dihydroxy-3-methylvalerate) into 2-oxo-3-methylpentanoate (2-oxo-3-methylvalerate) and of (2R)-2,3-dihydroxy-3-methylbutanoate (2,3-dihydroxyisovalerate) into 2-oxo-3-methylbutanoate (2-oxoisovalerate), the penultimate precursor to L-isoleucine and L-valine, respectively. The chain is Dihydroxy-acid dehydratase from Brucella melitensis biotype 1 (strain ATCC 23456 / CCUG 17765 / NCTC 10094 / 16M).